Reading from the N-terminus, the 148-residue chain is Lysozyme C (148 aa).

The first 18 residues, 1–18 (MKAVIILGLVLLSVTVQG), serve as a signal peptide directing secretion. The C-type lysozyme domain maps to 19 to 148 (KIFERCELAR…VSQYVQGCGV (130 aa)). Disulfide bonds link Cys24–Cys146, Cys48–Cys134, Cys83–Cys99, and Cys95–Cys113. Catalysis depends on residues Glu53 and Asp71.

This sequence belongs to the glycosyl hydrolase 22 family. Monomer.

The protein localises to the secreted. The catalysed reaction is Hydrolysis of (1-&gt;4)-beta-linkages between N-acetylmuramic acid and N-acetyl-D-glucosamine residues in a peptidoglycan and between N-acetyl-D-glucosamine residues in chitodextrins.. In terms of biological role, lysozymes have primarily a bacteriolytic function; those in tissues and body fluids are associated with the monocyte-macrophage system and enhance the activity of immunoagents. This Macaca mulatta (Rhesus macaque) protein is Lysozyme C (LYZ).